The primary structure comprises 473 residues: 23S rRNA (uracil(1939)-C(5))-methyltransferase RlmD (473 aa).

Residues 6-27 (KPSKGKNKSNVKGRVRGAGSGE) are disordered. A compositionally biased stretch (basic residues) spans 8-20 (SKGKNKSNVKGRV). Positions 42–99 (DDINAANEAVTIDGMDWQGQGVARGDTLYFVDGALPGETVEIKALSSNKQIVNAKVTK) constitute a TRAM domain. [4Fe-4S] cluster-binding residues include Cys112, Cys118, Cys121, and Cys199. S-adenosyl-L-methionine-binding residues include Gln304, Phe333, Asn338, Glu354, Asp381, and Asp402. Residue Cys428 is the Nucleophile of the active site.

The protein belongs to the class I-like SAM-binding methyltransferase superfamily. RNA M5U methyltransferase family. RlmD subfamily.

It catalyses the reaction uridine(1939) in 23S rRNA + S-adenosyl-L-methionine = 5-methyluridine(1939) in 23S rRNA + S-adenosyl-L-homocysteine + H(+). Functionally, catalyzes the formation of 5-methyl-uridine at position 1939 (m5U1939) in 23S rRNA. The polypeptide is 23S rRNA (uracil(1939)-C(5))-methyltransferase RlmD (Alteromonas naphthalenivorans).